The sequence spans 209 residues: Pyridoxine/pyridoxamine 5'-phosphate oxidase (209 aa).

Residues 7-10 (REDY) and K64 contribute to the substrate site. Residues 59–64 (RIVLLK), 74–75 (FT), R80, and K81 contribute to the FMN site. The substrate site is built by Y121, R125, and S129. Residues 138-139 (QS) and W182 contribute to the FMN site. Residue 188–190 (RLH) coordinates substrate. R192 contacts FMN.

It belongs to the pyridoxamine 5'-phosphate oxidase family. As to quaternary structure, homodimer. The cofactor is FMN.

The enzyme catalyses pyridoxamine 5'-phosphate + O2 + H2O = pyridoxal 5'-phosphate + H2O2 + NH4(+). It catalyses the reaction pyridoxine 5'-phosphate + O2 = pyridoxal 5'-phosphate + H2O2. It functions in the pathway cofactor metabolism; pyridoxal 5'-phosphate salvage; pyridoxal 5'-phosphate from pyridoxamine 5'-phosphate: step 1/1. Its pathway is cofactor metabolism; pyridoxal 5'-phosphate salvage; pyridoxal 5'-phosphate from pyridoxine 5'-phosphate: step 1/1. Catalyzes the oxidation of either pyridoxine 5'-phosphate (PNP) or pyridoxamine 5'-phosphate (PMP) into pyridoxal 5'-phosphate (PLP). This Actinobacillus pleuropneumoniae serotype 7 (strain AP76) protein is Pyridoxine/pyridoxamine 5'-phosphate oxidase.